Here is a 105-residue protein sequence, read N- to C-terminus: Precursor of CEP15 (105 aa).

The first 29 residues, 1–29 (MDATKIKFDVILLSFLLIISGIPSNLGLS), serve as a signal peptide directing secretion. The propeptide occupies 30-90 (TSVRGTTRSE…PSPPVPDYDD (61 aa)). The segment covering 68–80 (DYYDGGSSSSTTS) has biased composition (low complexity). The tract at residues 68–105 (DYYDGGSSSSTTSPSPPVPDYDDIYRRQGDVPSPGIGH) is disordered. Residues Pro99 and Pro101 each carry the hydroxyproline modification.

This sequence belongs to the C-terminally encoded plant signaling peptide (CEP) family. Interacts with CEP receptors (e.g. CEPR1 and CEPR2). Post-translationally, the mature small signaling peptide is generated by proteolytic processing of the longer precursor.

The protein localises to the secreted. It is found in the extracellular space. The protein resides in the apoplast. Functionally, extracellular signaling peptide that may regulate primary root growth rate and systemic nitrogen (N)-demand signaling. The protein is Precursor of CEP15 of Arabidopsis thaliana (Mouse-ear cress).